The following is a 51-amino-acid chain: Lantibiotic streptococcin A-M49 (51 aa).

A propeptide spanning residues Met1–Ala25 is cleaved from the precursor. 2 consecutive cross-links (beta-methyllanthionine (Thr-Cys)) follow at residues Thr33–Cys38 and Thr42–Cys50. The segment at residues Ser35 to Cys49 is a cross-link (lanthionine (Ser-Cys)). Thr48 carries the post-translational modification 2,3-didehydrobutyrine.

The protein belongs to the type A lantibiotic family. In terms of processing, maturation of lantibiotics involves the enzymatic conversion of Thr, and Ser into dehydrated AA and the formation of thioether bonds with cysteine. This is followed by membrane translocation and cleavage of the modified precursor.

The protein localises to the secreted. The protein resides in the cell surface. In terms of biological role, lanthionine-containing peptide antibiotic (lantibiotic) active on certain Gram-positive bacteria. The bactericidal activity of lantibiotics is based on depolarization of energized bacterial cytoplasmic membranes, initiated by the formation of aqueous transmembrane pores. In Streptococcus pyogenes serotype M49, this protein is Lantibiotic streptococcin A-M49 (scnA').